The following is a 420-amino-acid chain: Gamma-glutamyl phosphate reductase (420 aa).

It belongs to the gamma-glutamyl phosphate reductase family.

Its subcellular location is the cytoplasm. It catalyses the reaction L-glutamate 5-semialdehyde + phosphate + NADP(+) = L-glutamyl 5-phosphate + NADPH + H(+). It participates in amino-acid biosynthesis; L-proline biosynthesis; L-glutamate 5-semialdehyde from L-glutamate: step 2/2. In terms of biological role, catalyzes the NADPH-dependent reduction of L-glutamate 5-phosphate into L-glutamate 5-semialdehyde and phosphate. The product spontaneously undergoes cyclization to form 1-pyrroline-5-carboxylate. In Cereibacter sphaeroides (strain ATCC 17023 / DSM 158 / JCM 6121 / CCUG 31486 / LMG 2827 / NBRC 12203 / NCIMB 8253 / ATH 2.4.1.) (Rhodobacter sphaeroides), this protein is Gamma-glutamyl phosphate reductase.